Reading from the N-terminus, the 347-residue chain is Putative ORC1-type DNA replication protein 1 (347 aa).

ATP-binding positions include threonine 34–valine 38, tyrosine 167, and arginine 179.

The protein belongs to the CDC6/cdc18 family.

Functionally, involved in regulation of DNA replication. Has no effect on MCM helicase activity, either stimulatory or inhibitory. Does not bind DNA. In Thermoplasma acidophilum (strain ATCC 25905 / DSM 1728 / JCM 9062 / NBRC 15155 / AMRC-C165), this protein is Putative ORC1-type DNA replication protein 1 (cdc6-1).